The primary structure comprises 134 residues: ATP synthase epsilon chain (134 aa).

The segment covering 94-104 (AKLAKSRAESH) has biased composition (basic and acidic residues). Residues 94 to 115 (AKLAKSRAESHLEDDDDNTDIN) are disordered.

It belongs to the ATPase epsilon chain family. In terms of assembly, F-type ATPases have 2 components, CF(1) - the catalytic core - and CF(0) - the membrane proton channel. CF(1) has five subunits: alpha(3), beta(3), gamma(1), delta(1), epsilon(1). CF(0) has three main subunits: a, b and c.

The protein resides in the cell membrane. Its function is as follows. Produces ATP from ADP in the presence of a proton gradient across the membrane. The chain is ATP synthase epsilon chain from Staphylococcus epidermidis (strain ATCC 12228 / FDA PCI 1200).